Reading from the N-terminus, the 882-residue chain is Valine--tRNA ligase (882 aa).

The 'HIGH' region motif lies at 45–55; that stretch reads PNVTGSLHIGH. The 'KMSKS' region motif lies at 525-529; sequence KFSKS. Residue Lys-528 participates in ATP binding. The stretch at 812 to 881 forms a coiled coil; that stretch reads EGLIDVAKEK…VLKKGIQNLA (70 aa).

It belongs to the class-I aminoacyl-tRNA synthetase family. ValS type 1 subfamily. In terms of assembly, monomer.

It localises to the cytoplasm. It carries out the reaction tRNA(Val) + L-valine + ATP = L-valyl-tRNA(Val) + AMP + diphosphate. Catalyzes the attachment of valine to tRNA(Val). As ValRS can inadvertently accommodate and process structurally similar amino acids such as threonine, to avoid such errors, it has a 'posttransfer' editing activity that hydrolyzes mischarged Thr-tRNA(Val) in a tRNA-dependent manner. The polypeptide is Valine--tRNA ligase (Leptospira interrogans serogroup Icterohaemorrhagiae serovar Lai (strain 56601)).